The following is a 204-amino-acid chain: Cytochrome c biogenesis ATP-binding export protein CcmA (204 aa).

The region spanning 3–204 is the ABC transporter domain; that stretch reads LTVTDLAIAR…PLDDPDGDFL (202 aa). 35 to 42 contributes to the ATP binding site; the sequence is GPNGAGKT.

The protein belongs to the ABC transporter superfamily. CcmA exporter (TC 3.A.1.107) family. The complex is composed of two ATP-binding proteins (CcmA) and two transmembrane proteins (CcmB).

The protein resides in the cell membrane. The catalysed reaction is heme b(in) + ATP + H2O = heme b(out) + ADP + phosphate + H(+). Functionally, part of the ABC transporter complex CcmAB involved in the biogenesis of c-type cytochromes; once thought to export heme, this seems not to be the case, but its exact role is uncertain. Responsible for energy coupling to the transport system. This is Cytochrome c biogenesis ATP-binding export protein CcmA from Ruegeria pomeroyi (strain ATCC 700808 / DSM 15171 / DSS-3) (Silicibacter pomeroyi).